A 334-amino-acid polypeptide reads, in one-letter code: Desumoylating isopeptidase 1 homolog (334 aa).

The PPPDE domain maps to 30 to 174; sequence TVVRLNVYDM…FLEKCIPQEW (145 aa). Active-site residues include histidine 55 and cysteine 133. Positions 310–325 are enriched in polar residues; sequence SNIGKTNSTPGTTSNG. Residues 310 to 334 form a disordered region; the sequence is SNIGKTNSTPGTTSNGLAKPTCSEC.

Belongs to the DeSI family. Expressed in the pharynx, hypodermis, intestine, head neuron and tail neuron.

Its subcellular location is the cytoplasm. The protein localises to the nucleus. Its function is as follows. Protease which deconjugates SUMO from some substrate proteins. Has isopeptidase but not SUMO-processing activity. Collaborates with ubql-1 in the export of ubiquitinated proteins from the nucleus to the cytoplasm. The protein is Desumoylating isopeptidase 1 homolog of Caenorhabditis elegans.